Here is a 142-residue protein sequence, read N- to C-terminus: HTH-type transcriptional regulator MntR (142 aa).

The 63-residue stretch at 1-63 (MPTPSMEDYI…YEKYRGLVLT (63 aa)) folds into the HTH dtxR-type domain. D8, E11, H77, E99, E102, and H103 together coordinate Mn(2+).

This sequence belongs to the DtxR/MntR family. As to quaternary structure, homodimer.

It is found in the cytoplasm. With respect to regulation, DNA binding is strongly activated by Mn(2+). Functionally, central regulator of manganese homeostasis. The chain is HTH-type transcriptional regulator MntR from Bacillus cereus (strain ATCC 14579 / DSM 31 / CCUG 7414 / JCM 2152 / NBRC 15305 / NCIMB 9373 / NCTC 2599 / NRRL B-3711).